Here is a 211-residue protein sequence, read N- to C-terminus: Superoxide dismutase [Cu-Zn], chloroplastic (211 aa).

A chloroplast-targeting transit peptide spans 1-57 (MQAILAAAMAAQTLLFSATAPPASLFQSPSSARPFHSLRLAAGPAGAAAARALVVAD). Positions 103, 105, and 120 each coordinate Cu cation. A disulfide bridge connects residues Cys114 and Cys203. His120, His128, His137, and Asp140 together coordinate Zn(2+). His177 contacts Cu cation.

The protein belongs to the Cu-Zn superoxide dismutase family. As to quaternary structure, homotetramer. The cofactor is Cu cation. Zn(2+) serves as cofactor.

Its subcellular location is the plastid. The protein localises to the chloroplast. The enzyme catalyses 2 superoxide + 2 H(+) = H2O2 + O2. Functionally, destroys radicals which are normally produced within the cells and which are toxic to biological systems. This chain is Superoxide dismutase [Cu-Zn], chloroplastic (SODCP), found in Oryza sativa subsp. japonica (Rice).